Reading from the N-terminus, the 62-residue chain is Photosystem II reaction center protein Z (62 aa).

Helical transmembrane passes span 8-28 and 41-61; these read AVFALISTSLILLIGVPVVFA and FSGTSLWIGLVFLVGILNSLI.

This sequence belongs to the PsbZ family. In terms of assembly, PSII is composed of 1 copy each of membrane proteins PsbA, PsbB, PsbC, PsbD, PsbE, PsbF, PsbH, PsbI, PsbJ, PsbK, PsbL, PsbM, PsbT, PsbY, PsbZ, Psb30/Ycf12, at least 3 peripheral proteins of the oxygen-evolving complex and a large number of cofactors. It forms dimeric complexes.

Its subcellular location is the plastid. It is found in the chloroplast thylakoid membrane. Functionally, may control the interaction of photosystem II (PSII) cores with the light-harvesting antenna, regulates electron flow through the 2 photosystem reaction centers. PSII is a light-driven water plastoquinone oxidoreductase, using light energy to abstract electrons from H(2)O, generating a proton gradient subsequently used for ATP formation. This is Photosystem II reaction center protein Z from Pelargonium hortorum (Common geranium).